The chain runs to 348 residues: Hereditary hemochromatosis protein (348 aa).

A signal peptide spans methionine 1 to glycine 22. Positions arginine 23–glutamate 114 are alpha-1. Over arginine 23 to valine 306 the chain is Extracellular. Asparagine 110, asparagine 130, and asparagine 234 each carry an N-linked (GlcNAc...) asparagine glycan. The alpha-2 stretch occupies residues serine 115 to glutamine 205. Disulfide bonds link cysteine 124/cysteine 187 and cysteine 225/cysteine 282. Positions valine 206–tryptophan 297 are alpha-3. The Ig-like C1-type domain occupies proline 207–glutamate 298. Residues glutamate 298–valine 306 form a connecting peptide region. A helical transmembrane segment spans residues isoleucine 307–arginine 330. The Cytoplasmic segment spans residues lysine 331–glutamate 348.

It belongs to the MHC class I family. As to quaternary structure, binds TFR through the extracellular domain in a pH-dependent manner. Expressed in all tissues tested except brain.

Its subcellular location is the cell membrane. Its function is as follows. Binds to transferrin receptor (TFR) and reduces its affinity for iron-loaded transferrin. This chain is Hereditary hemochromatosis protein (HFE), found in Homo sapiens (Human).